We begin with the raw amino-acid sequence, 77 residues long: Conotoxin CaHr91 (77 aa).

Residues 1-19 form the signal peptide; that stretch reads MKLTCALIITVLFLSITAD. Positions 20 to 43 are excised as a propeptide; that stretch reads DSRGKQGYRALKSIAGMLNSKTVR. 3 disulfide bridges follow: C45–C60, C52–C65, and C59–C74.

Belongs to the conotoxin O1 superfamily. As to expression, expressed by the venom duct.

It localises to the secreted. The chain is Conotoxin CaHr91 from Conus capitaneus (Captain cone).